The sequence spans 132 residues: Small ribosomal subunit protein uS8c (132 aa).

It belongs to the universal ribosomal protein uS8 family. Part of the 30S ribosomal subunit.

It localises to the plastid. The protein resides in the chloroplast. One of the primary rRNA binding proteins, it binds directly to 16S rRNA central domain where it helps coordinate assembly of the platform of the 30S subunit. This Adiantum capillus-veneris (Maidenhair fern) protein is Small ribosomal subunit protein uS8c (rps8).